Consider the following 251-residue polypeptide: 2,3-bisphosphoglycerate-dependent phosphoglycerate mutase (251 aa).

Substrate contacts are provided by residues 7-14, 20-21, Arg59, 86-89, Lys97, 113-114, and 186-187; these read RHGESEWN, TG, ERHY, RR, and GN. The active-site Tele-phosphohistidine intermediate is His8. The Proton donor/acceptor role is filled by Glu86.

This sequence belongs to the phosphoglycerate mutase family. BPG-dependent PGAM subfamily.

It catalyses the reaction (2R)-2-phosphoglycerate = (2R)-3-phosphoglycerate. The protein operates within carbohydrate degradation; glycolysis; pyruvate from D-glyceraldehyde 3-phosphate: step 3/5. Catalyzes the interconversion of 2-phosphoglycerate and 3-phosphoglycerate. The sequence is that of 2,3-bisphosphoglycerate-dependent phosphoglycerate mutase from Treponema pallidum (strain Nichols).